We begin with the raw amino-acid sequence, 517 residues long: Maturase K (517 aa).

It belongs to the intron maturase 2 family. MatK subfamily.

It localises to the plastid. Its subcellular location is the chloroplast. Functionally, usually encoded in the trnK tRNA gene intron. Probably assists in splicing its own and other chloroplast group II introns. This Veronica arvensis (Wall speedwell) protein is Maturase K.